The sequence spans 233 residues: Histidinol dehydrogenase (233 aa).

3 residues coordinate substrate: serine 31, glutamine 53, and histidine 56. 2 residues coordinate Zn(2+): glutamine 53 and histidine 56. Active-site proton acceptor residues include glutamate 121 and histidine 122. Substrate contacts are provided by histidine 122, aspartate 155, glutamate 209, and histidine 214. A Zn(2+)-binding site is contributed by aspartate 155. Residue histidine 214 coordinates Zn(2+).

It belongs to the histidinol dehydrogenase family. Requires Zn(2+) as cofactor.

It catalyses the reaction L-histidinol + 2 NAD(+) + H2O = L-histidine + 2 NADH + 3 H(+). It functions in the pathway amino-acid biosynthesis; L-histidine biosynthesis; L-histidine from 5-phospho-alpha-D-ribose 1-diphosphate: step 9/9. Catalyzes the sequential NAD-dependent oxidations of L-histidinol to L-histidinaldehyde and then to L-histidine. This is Histidinol dehydrogenase (hisD) from Thiocapsa roseopersicina.